We begin with the raw amino-acid sequence, 204 residues long: Ribosome maturation factor RimM (204 aa).

The region spanning 117–192 (DEDEFFSADL…EVTIDPPDDL (76 aa)) is the PRC barrel domain.

This sequence belongs to the RimM family. Binds ribosomal protein uS19.

The protein localises to the cytoplasm. An accessory protein needed during the final step in the assembly of 30S ribosomal subunit, possibly for assembly of the head region. Essential for efficient processing of 16S rRNA. May be needed both before and after RbfA during the maturation of 16S rRNA. It has affinity for free ribosomal 30S subunits but not for 70S ribosomes. This Methylobacterium nodulans (strain LMG 21967 / CNCM I-2342 / ORS 2060) protein is Ribosome maturation factor RimM.